The following is a 390-amino-acid chain: Galactokinase (390 aa).

35 to 38 serves as a coordination point for substrate; the sequence is EHTD. An ATP-binding site is contributed by 125–131; it reads GAGLSSS. Mg(2+)-binding residues include serine 131 and glutamate 163. Aspartate 175 acts as the Proton acceptor in catalysis. Residue tyrosine 224 coordinates substrate.

This sequence belongs to the GHMP kinase family. GalK subfamily.

The protein resides in the cytoplasm. The enzyme catalyses alpha-D-galactose + ATP = alpha-D-galactose 1-phosphate + ADP + H(+). Its pathway is carbohydrate metabolism; galactose metabolism. Its function is as follows. Catalyzes the transfer of the gamma-phosphate of ATP to D-galactose to form alpha-D-galactose-1-phosphate (Gal-1-P). This Proteus mirabilis (strain HI4320) protein is Galactokinase.